A 341-amino-acid chain; its full sequence is Farnesyl pyrophosphate synthase (341 aa).

3 residues coordinate isopentenyl diphosphate: lysine 48, arginine 51, and glutamine 86. Positions 93 and 97 each coordinate Mg(2+). Arginine 102 provides a ligand contact to dimethylallyl diphosphate. Position 103 (arginine 103) interacts with isopentenyl diphosphate. Residues lysine 190, threonine 191, glutamine 229, and lysine 246 each coordinate dimethylallyl diphosphate.

Belongs to the FPP/GGPP synthase family. Mg(2+) is required as a cofactor.

The protein resides in the cytoplasm. It carries out the reaction isopentenyl diphosphate + dimethylallyl diphosphate = (2E)-geranyl diphosphate + diphosphate. The enzyme catalyses isopentenyl diphosphate + (2E)-geranyl diphosphate = (2E,6E)-farnesyl diphosphate + diphosphate. The protein operates within isoprenoid biosynthesis; farnesyl diphosphate biosynthesis; farnesyl diphosphate from geranyl diphosphate and isopentenyl diphosphate: step 1/1. It functions in the pathway isoprenoid biosynthesis; geranyl diphosphate biosynthesis; geranyl diphosphate from dimethylallyl diphosphate and isopentenyl diphosphate: step 1/1. Its function is as follows. Catalyzes the sequential condensation of isopentenyl pyrophosphate with the allylic pyrophosphates, dimethylallyl pyrophosphate, and then with the resultant geranylpyrophosphate to the ultimate product farnesyl pyrophosphate. The sequence is that of Farnesyl pyrophosphate synthase (FPS1) from Helianthus annuus (Common sunflower).